Reading from the N-terminus, the 312-residue chain is Zinc transporter ZitB (312 aa).

The next 5 helical transmembrane spans lie at 21 to 41, 48 to 68, 90 to 110, 123 to 143, and 164 to 184; these read LLFA…GGIL, LADA…LLAV, AAFV…WEAI, LMMV…WILH, and LLGS…GWTP.

This sequence belongs to the cation diffusion facilitator (CDF) transporter (TC 2.A.4) family. SLC30A subfamily.

The protein resides in the cell inner membrane. Involved in zinc efflux across the cytoplasmic membrane, thus reducing zinc accumulation in the cytoplasm and rendering bacteria more resistant to zinc. It may contribute to zinc homeostasis at low concentrations of zinc. The protein is Zinc transporter ZitB of Salmonella typhimurium (strain LT2 / SGSC1412 / ATCC 700720).